Consider the following 152-residue polypeptide: Urease accessory protein UreE (152 aa).

Belongs to the UreE family.

It localises to the cytoplasm. Functionally, involved in urease metallocenter assembly. Binds nickel. Probably functions as a nickel donor during metallocenter assembly. The protein is Urease accessory protein UreE of Enterobacter sp. (strain 638).